We begin with the raw amino-acid sequence, 368 residues long: DNA replication and repair protein RecF (368 aa).

Residue 30-37 (GDNGAGKT) coordinates ATP.

The protein belongs to the RecF family.

It is found in the cytoplasm. In terms of biological role, the RecF protein is involved in DNA metabolism; it is required for DNA replication and normal SOS inducibility. RecF binds preferentially to single-stranded, linear DNA. It also seems to bind ATP. In Xanthomonas axonopodis pv. citri (strain 306), this protein is DNA replication and repair protein RecF.